The following is a 57-amino-acid chain: Small ribosomal subunit protein eS31 (57 aa).

Zn(2+) contacts are provided by cysteine 29, cysteine 32, cysteine 47, and cysteine 50. Residues 29–50 (CSRCGKGTYMSEHKDRNTCGKC) form a C4-type zinc finger.

The protein belongs to the eukaryotic ribosomal protein eS31 family. As to quaternary structure, part of the 30S ribosomal subunit. Zn(2+) is required as a cofactor.

This chain is Small ribosomal subunit protein eS31, found in Nitrosopumilus maritimus (strain SCM1).